We begin with the raw amino-acid sequence, 512 residues long: Pantothenate transporter FEN2 (512 aa).

The Cytoplasmic portion of the chain corresponds to 1-27 (MMKESKSITQHEVERESVSSKRAIKKR). Residues 28 to 48 (LLLFKIDLFVLSFVCLQYWIN) form a helical membrane-spanning segment. At 49 to 79 (YVDRVGFTNAYISGMKEDLKMVGNDLTVSNT) the chain is on the extracellular side. Residues 80 to 100 (VFMIGYIVGMVPNNLMLLCVP) form a helical membrane-spanning segment. The Cytoplasmic segment spans residues 101 to 102 (PR). Residues 103 to 123 (IWLSFCTFAWGLLTLGMYKVT) form a helical membrane-spanning segment. The Extracellular segment spans residues 124-132 (SFKHICAIR). A helical transmembrane segment spans residues 133-153 (FFQALFESCTFSGTHFVLGSW). The Cytoplasmic segment spans residues 154–164 (YKEDELPIRSA). A helical transmembrane segment spans residues 165–185 (IFTGSGLVGSMFSGFMQTSIF). Over 186–198 (THLNGRNGLAGWR) the chain is Extracellular. A helical transmembrane segment spans residues 199-219 (WLFIIDFCITLPIAIYGFIFF). Residues 220 to 271 (PGLPDQTSAVSKFSMTRYIFNEQELHYARRRLPARDESTRLDWSTIPRVLKR) are Cytoplasmic-facing. Residues 272 to 292 (WHWWMFSLVWVLGGENLGFAS) form a helical membrane-spanning segment. Topologically, residues 293–312 (NSTFALWLQNQKYTLAQRNN) are extracellular. A helical membrane pass occupies residues 313 to 333 (YPSGIFAVGIVSTLCSAVYMS). The Cytoplasmic segment spans residues 334-342 (KIPRARHWH). A helical transmembrane segment spans residues 343 to 363 (VSVFISLVMVIVAVLIRADPL). The Extracellular segment spans residues 364–372 (NPKVVFSAQ). The helical transmembrane segment at 373–393 (YLGGVAYAGQAVFFSWANIIC) threads the bilayer. Residues 394–401 (HADLQERA) lie on the Cytoplasmic side of the membrane. A helical transmembrane segment spans residues 402–422 (IVLASMNMFSGAVNAWWSILF). Residues 423–434 (FASDMVPKFERG) lie on the Extracellular side of the membrane. Residues 435–455 (CYALLATAISSGIVSVVIRSL) traverse the membrane as a helical segment. At 456–512 (QIKENLSKKQVPYIDANDMPGEDDDDDNQDNENDGDDESMEVELHNEEMAEISNPFR) the chain is on the cytoplasmic side. The segment at 468 to 512 (YIDANDMPGEDDDDDNQDNENDGDDESMEVELHNEEMAEISNPFR) is disordered. Acidic residues predominate over residues 475-496 (PGEDDDDDNQDNENDGDDESME).

This sequence belongs to the major facilitator superfamily. Allantoate permease family.

Its subcellular location is the cell membrane. Functionally, transports pantothenate into the cell. Also involved in the catabolite repression-mediated regulation of ergosterol biosynthesis and in fenpropimorph resistance. The protein is Pantothenate transporter FEN2 (FEN2) of Saccharomyces cerevisiae (strain ATCC 204508 / S288c) (Baker's yeast).